The sequence spans 252 residues: Imidazole glycerol phosphate synthase subunit HisF (252 aa).

Catalysis depends on residues D11 and D130.

Belongs to the HisA/HisF family. Heterodimer of HisH and HisF.

It is found in the cytoplasm. The enzyme catalyses 5-[(5-phospho-1-deoxy-D-ribulos-1-ylimino)methylamino]-1-(5-phospho-beta-D-ribosyl)imidazole-4-carboxamide + L-glutamine = D-erythro-1-(imidazol-4-yl)glycerol 3-phosphate + 5-amino-1-(5-phospho-beta-D-ribosyl)imidazole-4-carboxamide + L-glutamate + H(+). The protein operates within amino-acid biosynthesis; L-histidine biosynthesis; L-histidine from 5-phospho-alpha-D-ribose 1-diphosphate: step 5/9. Functionally, IGPS catalyzes the conversion of PRFAR and glutamine to IGP, AICAR and glutamate. The HisF subunit catalyzes the cyclization activity that produces IGP and AICAR from PRFAR using the ammonia provided by the HisH subunit. The sequence is that of Imidazole glycerol phosphate synthase subunit HisF from Bacillus anthracis (strain CDC 684 / NRRL 3495).